Consider the following 144-residue polypeptide: uncharacterized protein (144 aa).

This is an uncharacterized protein from Saccharomyces cerevisiae (strain ATCC 204508 / S288c) (Baker's yeast).